Here is a 341-residue protein sequence, read N- to C-terminus: UDP-glucose 4-epimerase (341 aa).

This sequence belongs to the polysaccharide synthase family.

It carries out the reaction UDP-alpha-D-glucose = UDP-alpha-D-galactose. Epimerizes UDP-galactose to UDP-glucose. The protein is UDP-glucose 4-epimerase (capD) of Rickettsia typhi (strain ATCC VR-144 / Wilmington).